A 1539-amino-acid polypeptide reads, in one-letter code: Lysine-specific demethylase 5D (1539 aa).

Positions 14–55 (CPVFEPSWAEFQDPLGYIAKIRPIAEKSGICKIRPPADWQPP) constitute a JmjN domain. The 91-residue stretch at 79 to 169 (TRVKLNYLDQ…IIYPYEMFQS (91 aa)) folds into the ARID domain. Residues 192–228 (PHSIPLRQSVQPSKFSSYSRRAKRLQPDPEPTEEDIE) form a disordered region. A compositionally biased stretch (polar residues) spans 197–210 (LRQSVQPSKFSSYS). Glycyl lysine isopeptide (Lys-Gly) (interchain with G-Cter in SUMO2) cross-links involve residues Lys205, Lys229, Lys244, and Lys272. Ser291 and Ser307 each carry phosphoserine. Residues 316-362 (ICQVCSRGDEDDKLLFCDGCDDNYHIFCLLPPLPEIPRGIWRCPKCI) form a PHD-type 1 zinc finger. Residue Tyr430 participates in 2-oxoglutarate binding. Residues 458-624 (EYATSGWNLN…AGRQCIEHYR (167 aa)) form the JmjC domain. Positions 504 and 506 each coordinate Fe cation. 2-oxoglutarate contacts are provided by Ser512, Asn514, and Lys522. His592 is a Fe cation binding site. The C5HC2 zinc finger occupies 697–749 (CIKCKTTCFLSALACYDCPDGLVCLSHINDLCKCSSSRQYLRYRYTLDELPTM). Ser884 is subject to Phosphoserine. The PHD-type 2 zinc finger occupies 1174 to 1235 (ICVCGQVPAG…DTKFLCPLCM (62 aa)). A Phosphoserine modification is found at Ser1346. Residues 1429–1521 (HQGSRTRSRA…QHKDSGSSAA (93 aa)) are disordered. The segment covering 1432–1446 (SRTRSRALERRRRRQ) has biased composition (basic residues). The span at 1477–1491 (GREEEHYQEKADREN) shows a compositional bias: basic and acidic residues. Over residues 1494–1521 (LTPSTDHSPFLKGNQNSLQHKDSGSSAA) the composition is skewed to polar residues.

The protein belongs to the JARID1 histone demethylase family. Interacts with PCGF6, MSH5, ZMYND8, AR. It depends on L-ascorbate as a cofactor. Fe(2+) is required as a cofactor. In terms of tissue distribution, expression is highly down-regulated in metastatic prostate tumors.

The protein localises to the nucleus. It carries out the reaction N(6),N(6),N(6)-trimethyl-L-lysyl(4)-[histone H3] + 3 2-oxoglutarate + 3 O2 = L-lysyl(4)-[histone H3] + 3 formaldehyde + 3 succinate + 3 CO2. Histone demethylase that specifically demethylates 'Lys-4' of histone H3, thereby playing a central role in histone code. Does not demethylate histone H3 'Lys-9', H3 'Lys-27', H3 'Lys-36', H3 'Lys-79' or H4 'Lys-20'. Demethylates trimethylated and dimethylated but not monomethylated H3 'Lys-4'. May play a role in spermatogenesis. Involved in transcriptional repression of diverse metastasis-associated genes; in this function seems to cooperate with ZMYND8. Suppresses prostate cancer cell invasion. Regulates androgen receptor (AR) transcriptional activity by demethylating H3K4me3 active transcription marks. The polypeptide is Lysine-specific demethylase 5D (KDM5D) (Homo sapiens (Human)).